Here is a 299-residue protein sequence, read N- to C-terminus: Non-structural protein V (299 aa).

The interval 40 to 98 is disordered; it reads SDNPGQEQATCKEEEAGASGLSKPCLSAIGSTEGGAPRIRGQGSGESDDDTETLGFPSR. The tract at residues 110–120 is interaction with host STAT1; sequence YYVYDHSGEAV. Residues 134–145 are compositionally biased toward low complexity; the sequence is GLDGDSTLSGGD. Disordered stretches follow at residues 134–174 and 204–230; these read GLDG…APIS and PKLGKTLNVPPPPDPGRASTSETPIKK. Acidic residues predominate over residues 146 to 160; sequence NESENSDVDIGEPDT. Residues His232, Cys251, Cys255, Cys267, Cys269, Cys272, Cys276, and Cys279 each contribute to the Zn(2+) site.

Belongs to the paramyxoviruses V protein family. In terms of assembly, interacts with host IFIH1/MDA5 and DHX58/LGP2; these interactions are involved in the inhibition of the host type I interferon signaling pathway. Interacts with host TYK2; this interaction inhibits the type I interferon signaling pathway without affecting the type II pathway. Interacts with host IRF7; this interaction inhibits IRF7 translocation to the nucleus. Interacts with host CHUK. Interacts with host RELA/p65; this interaction inhibits the nuclear translocation of NF-KappaB. Interacts (via N-terminus) with host STAT1 and JAK1; these interactions inhibit STAT1 phosphorylation by Jak1 and thereby the type I interferon signaling pathway. Interacts (via C-terminus) with host STAT2; this interaction is involved in the inhibition of the host type I interferon signaling pathway. Forms a complex with host PPP1CA and PPP1CC; this interaction prevents dephosphorylation of host IFIH1/MDA5 and leads to the inhibition of the host type I interferon signaling pathway. Interacts with host IRF9; this interaction prevents the binding of IRF9 to STAT2 and thereby the type I interferon signaling pathway. Interacts with host RIGI regulatory protein (via CARDs domain) and host TRIM25 (via SPRY domain); these interactions prevent TRIM25-mediated ubiquitination of RIG-I and disrupts downstream RIG-I signaling.

The protein resides in the host cytoplasm. In terms of biological role, plays an essential role in the inhibition of host immune response. Prevents the establishment of cellular antiviral state by blocking interferon-alpha/beta (IFN-alpha/beta) production and signaling pathway. Interacts with host IFIH1/MDA5 and DHX58/LGP2 to inhibit the transduction pathway involved in the activation of IFN-beta promoter, thus protecting the virus against cell antiviral state. Blocks the type I interferon signaling pathway by interacting with host TYK2 and thereby inhibiting downstream STAT1 and STAT2 phosphorylation. Blocks the type I interferon signaling pathway by disrupting the RIG-I signaling pathway. Moderately affects the type II interferon signaling. Prevents PP1alpha/gamma-mediated dephosphorylation of host IFIH1/MDA5 and thus blocks its activation. This chain is Non-structural protein V (P/V), found in Measles virus (strain IP-3-Ca) (MeV).